The chain runs to 123 residues: Small ribosomal subunit protein uS13 (123 aa).

The segment at 99–123 (RGQRTRTNARTRKGPRRTVGVKRKK) is disordered.

It belongs to the universal ribosomal protein uS13 family. Part of the 30S ribosomal subunit. Forms a loose heterodimer with protein S19. Forms two bridges to the 50S subunit in the 70S ribosome.

In terms of biological role, located at the top of the head of the 30S subunit, it contacts several helices of the 16S rRNA. In the 70S ribosome it contacts the 23S rRNA (bridge B1a) and protein L5 of the 50S subunit (bridge B1b), connecting the 2 subunits; these bridges are implicated in subunit movement. Contacts the tRNAs in the A and P-sites. This chain is Small ribosomal subunit protein uS13, found in Carboxydothermus hydrogenoformans (strain ATCC BAA-161 / DSM 6008 / Z-2901).